We begin with the raw amino-acid sequence, 412 residues long: Putative F-box protein At3g22940 (412 aa).

In terms of domain architecture, F-box spans Met1–Ala38.

The sequence is that of Putative F-box protein At3g22940 from Arabidopsis thaliana (Mouse-ear cress).